The primary structure comprises 201 residues: Holliday junction resolvase RecU (201 aa).

Mg(2+) is bound by residues Thr87, Asp89, Asp102, and Gln121.

It belongs to the RecU family. It depends on Mg(2+) as a cofactor.

The protein localises to the cytoplasm. It catalyses the reaction Endonucleolytic cleavage at a junction such as a reciprocal single-stranded crossover between two homologous DNA duplexes (Holliday junction).. Its function is as follows. Endonuclease that resolves Holliday junction intermediates in genetic recombination. Cleaves mobile four-strand junctions by introducing symmetrical nicks in paired strands. Promotes annealing of linear ssDNA with homologous dsDNA. Required for DNA repair, homologous recombination and chromosome segregation. This Levilactobacillus brevis (strain ATCC 367 / BCRC 12310 / CIP 105137 / JCM 1170 / LMG 11437 / NCIMB 947 / NCTC 947) (Lactobacillus brevis) protein is Holliday junction resolvase RecU.